Consider the following 80-residue polypeptide: Small ribosomal subunit protein uS17 (80 aa).

The protein belongs to the universal ribosomal protein uS17 family. In terms of assembly, part of the 30S ribosomal subunit.

One of the primary rRNA binding proteins, it binds specifically to the 5'-end of 16S ribosomal RNA. The polypeptide is Small ribosomal subunit protein uS17 (Brucella anthropi (strain ATCC 49188 / DSM 6882 / CCUG 24695 / JCM 21032 / LMG 3331 / NBRC 15819 / NCTC 12168 / Alc 37) (Ochrobactrum anthropi)).